The chain runs to 920 residues: Histone-lysine N-methyltransferase, H3 lysine-4 specific (920 aa).

In terms of domain architecture, RRM spans 94–179 (TQVFVSNISP…KPLSVVLDRD (86 aa)). A compositionally biased stretch (basic and acidic residues) spans 205-216 (KQRFEREDESSR). 2 disordered regions span residues 205-242 (KQRF…TLSN) and 448-485 (KRVD…YQLN). Polar residues-rich tracts occupy residues 233-242 (PSKNSQTLSN) and 453-462 (SKMNLSAGSK). The span at 463-476 (TKSKLQRRRRRRHE) shows a compositional bias: basic residues. The RxxxRR motif signature appears at 749–754 (RVNNRR). The SET domain occupies 781–898 (KQLHFGPSRI…HGEELTYDYK (118 aa)). Tyr-897 contacts S-adenosyl-L-methionine. Residues 904–920 (DKIPCLCGAPTCRGYLN) enclose the Post-SET domain.

Belongs to the class V-like SAM-binding methyltransferase superfamily. In terms of assembly, component of the Set1C/COMPASS complex composed of ash2, sdc1, set1, shg1, spp1, swd1, swd2 and swd3.

It localises to the nucleus. The protein localises to the chromosome. It catalyses the reaction L-lysyl(4)-[histone H3] + 3 S-adenosyl-L-methionine = N(6),N(6),N(6)-trimethyl-L-lysyl(4)-[histone H3] + 3 S-adenosyl-L-homocysteine + 3 H(+). The enzyme catalyses N(6)-methyl-L-lysyl(4)-[histone H3] + S-adenosyl-L-methionine = N(6),N(6)-dimethyl-L-lysyl(4)-[histone H3] + S-adenosyl-L-homocysteine + H(+). The catalysed reaction is N(6),N(6)-dimethyl-L-lysyl(4)-[histone H3] + S-adenosyl-L-methionine = N(6),N(6),N(6)-trimethyl-L-lysyl(4)-[histone H3] + S-adenosyl-L-homocysteine + H(+). Catalytic component of the COMPASS (Set1C) complex that specifically mono-, di- and trimethylates histone H3 to form H3K4me1/2/3. Binds RNA which might negatively affect its histone methyltransferase activity. COMPASS recognizes ubiquitinated H2B on one face of the nucleosome which stimulates the methylation of H3 on the opposing face. Methylation promotes maintenance of active chromatin states at euchromatic chromosomal domains and is present throughout the cell cycle. Plays a role in telomere maintenance and DNA repair in an ATM kinase rad3-dependent pathway. Required for efficient telomeric and centromeric silencing. In Schizosaccharomyces pombe (strain 972 / ATCC 24843) (Fission yeast), this protein is Histone-lysine N-methyltransferase, H3 lysine-4 specific.